A 1140-amino-acid chain; its full sequence is Chromosome partition protein Smc (1140 aa).

34-41 (PNGSGKSN) serves as a coordination point for ATP. Positions 160 to 484 (VDQFDSEIER…EKEASAKIAS (325 aa)) form a coiled coil. Positions 502-619 (EGVIGLVRDL…VQDIDAGRRL (118 aa)) constitute an SMC hinge domain. Residues 660–990 (LEGMKIQLSS…MLNEKKREVF (331 aa)) adopt a coiled-coil conformation.

The protein belongs to the SMC family. In terms of assembly, homodimer.

Its subcellular location is the cytoplasm. In terms of biological role, required for chromosome condensation and partitioning. This is Chromosome partition protein Smc from Thermoplasma acidophilum (strain ATCC 25905 / DSM 1728 / JCM 9062 / NBRC 15155 / AMRC-C165).